Here is a 402-residue protein sequence, read N- to C-terminus: 1-deoxy-D-xylulose 5-phosphate reductoisomerase (402 aa).

Residues Thr-13, Gly-14, Ser-15, Ile-16, and Asn-126 each contribute to the NADPH site. Lys-127 contacts 1-deoxy-D-xylulose 5-phosphate. Glu-128 serves as a coordination point for NADPH. Mn(2+) is bound at residue Asp-152. The 1-deoxy-D-xylulose 5-phosphate site is built by Ser-153, Glu-154, Ser-188, and His-211. Mn(2+) is bound at residue Glu-154. Gly-217 contacts NADPH. Residues Ser-224, Asn-229, Lys-230, and Glu-233 each coordinate 1-deoxy-D-xylulose 5-phosphate. Glu-233 contributes to the Mn(2+) binding site.

The protein belongs to the DXR family. It depends on Mg(2+) as a cofactor. Mn(2+) is required as a cofactor.

It catalyses the reaction 2-C-methyl-D-erythritol 4-phosphate + NADP(+) = 1-deoxy-D-xylulose 5-phosphate + NADPH + H(+). The protein operates within isoprenoid biosynthesis; isopentenyl diphosphate biosynthesis via DXP pathway; isopentenyl diphosphate from 1-deoxy-D-xylulose 5-phosphate: step 1/6. Its function is as follows. Catalyzes the NADPH-dependent rearrangement and reduction of 1-deoxy-D-xylulose-5-phosphate (DXP) to 2-C-methyl-D-erythritol 4-phosphate (MEP). This chain is 1-deoxy-D-xylulose 5-phosphate reductoisomerase, found in Psychrobacter cryohalolentis (strain ATCC BAA-1226 / DSM 17306 / VKM B-2378 / K5).